The primary structure comprises 455 residues: UDP-N-acetylmuramoylalanine--D-glutamate ligase (455 aa).

Position 119–125 (119–125 (GTNGKTT)) interacts with ATP.

The protein belongs to the MurCDEF family.

It is found in the cytoplasm. It catalyses the reaction UDP-N-acetyl-alpha-D-muramoyl-L-alanine + D-glutamate + ATP = UDP-N-acetyl-alpha-D-muramoyl-L-alanyl-D-glutamate + ADP + phosphate + H(+). It participates in cell wall biogenesis; peptidoglycan biosynthesis. Its function is as follows. Cell wall formation. Catalyzes the addition of glutamate to the nucleotide precursor UDP-N-acetylmuramoyl-L-alanine (UMA). This chain is UDP-N-acetylmuramoylalanine--D-glutamate ligase, found in Listeria monocytogenes serotype 4b (strain F2365).